We begin with the raw amino-acid sequence, 2383 residues long: Highly reducing polyketide synthase SAT13 (2383 aa).

One can recognise a Ketosynthase family 3 (KS3) domain in the interval 6-433; the sequence is PVPLAIVGIA…GTNAHAVLER (428 aa). Residues C180, H315, and H355 each act as for beta-ketoacyl synthase activity in the active site. Residues 536–828 are malonyl-CoA:ACP transacylase (MAT) domain; sequence FIFTGQGAQW…IGPHSALAGP (293 aa). S626 (for malonyltransferase activity) is an active-site residue. The tract at residues 922–1062 is N-terminal hotdog fold; it reads HDLLGLRMTE…GNIVVVFKTS (141 aa). Positions 922-1239 are dehydratase (DH) domain; the sequence is HDLLGLRMTE…GMELRSFVAR (318 aa). Residues 922 to 1242 form the PKS/mFAS DH domain; that stretch reads HDLLGLRMTE…LRSFVARDSN (321 aa). The active-site Proton acceptor; for dehydratase activity is the H954. The interval 1087–1242 is C-terminal hotdog fold; sequence GKLTHAGQLY…LRSFVARDSN (156 aa). The active-site Proton donor; for dehydratase activity is D1152. The interval 1669–1977 is enoylreductase (ER) domain; sequence DGQNRLVFVE…KQGSMKKCVL (309 aa). The tract at residues 2001–2184 is catalytic ketoreductase (KRc) domain; the sequence is ATYVVAGGLG…MSLNIGGIKD (184 aa). The Carrier domain maps to 2287–2364; that stretch reads EISEFVARSI…DLAQKVVSRS (78 aa). An O-(pantetheine 4'-phosphoryl)serine modification is found at S2324.

Its pathway is mycotoxin biosynthesis. Its function is as follows. Highly reducing polyketide synthase; part of the satratoxin SC2 cluster involved in the biosynthesis of satratoxins, trichothecene mycotoxins that are associated with human food poisonings. Satratoxins are suggested to be made by products of multiple gene clusters (SC1, SC2 and SC3) that encode 21 proteins in all, including polyketide synthases, acetyltransferases, and other enzymes expected to modify the trichothecene skeleton. SC1 encodes 10 proteins, SAT1 to SAT10. The largest are SAT8, which encodes a putative polyketide synthase (PKS) with a conventional non-reducing architecture, and SAT10, a putative protein containing four ankyrin repeats and thus may be involved in protein scaffolding. The putative short-chain reductase SAT3 may assist the PKS in some capacity. SAT6 contains a secretory lipase domain and acts probably as a trichothecene esterase. SAT5 encodes a putative acetyltransferase, and so, with SAT6, may affect endogenous protection from toxicity. The probable transcription factor SAT9 may regulate the expression of the SC1 cluster. SC2 encodes proteins SAT11 to SAT16, the largest of which encodes the putative reducing PKS SAT13. SAT11 is a cytochrome P450 monooxygenase, while SAT14 and SAT16 are probable acetyltransferases. The SC2 cluster may be regulated by the transcription factor SAT15. SC3 is a small cluster that encodes 5 proteins, SAT17 to SAT21. SAT21 is a putative MFS-type transporter which may have a role in exporting secondary metabolites. The four other proteins putatively encoded in SC3 include the taurine hydroxylase-like protein SAT17, the O-methyltransferase SAT18, the acetyltransferase SAT19, and the Cys6-type zinc finger SAT20, the latter being probably involved in regulation of SC3 expression. The protein is Highly reducing polyketide synthase SAT13 of Stachybotrys chartarum (strain CBS 109288 / IBT 7711) (Toxic black mold).